The sequence spans 263 residues: Oxygen-evolving enhancer protein 2-1, chloroplastic (263 aa).

Ser-153 is modified (phosphoserine).

It belongs to the PsbP family. Interacts with WAK1.

It localises to the plastid. Its subcellular location is the chloroplast thylakoid lumen. Its function is as follows. May be involved in the regulation of photosystem II. The polypeptide is Oxygen-evolving enhancer protein 2-1, chloroplastic (PSBP1) (Arabidopsis thaliana (Mouse-ear cress)).